The following is a 216-amino-acid chain: GTP cyclohydrolase 1 (216 aa).

3 residues coordinate Zn(2+): cysteine 109, histidine 112, and cysteine 180.

Belongs to the GTP cyclohydrolase I family. In terms of assembly, toroid-shaped homodecamer, composed of two pentamers of five dimers.

It carries out the reaction GTP + H2O = 7,8-dihydroneopterin 3'-triphosphate + formate + H(+). It functions in the pathway cofactor biosynthesis; 7,8-dihydroneopterin triphosphate biosynthesis; 7,8-dihydroneopterin triphosphate from GTP: step 1/1. This chain is GTP cyclohydrolase 1, found in Wigglesworthia glossinidia brevipalpis.